Here is a 773-residue protein sequence, read N- to C-terminus: Leucine-rich repeat and calponin homology domain-containing protein 2 (773 aa).

The disordered stretch occupies residues 1–46; sequence MAASQGGGGNSGGGGCSGGGSGGGGGAAGGGGGGGGGGGGGAGAGG. LRR repeat units lie at residues 97–118, 120–141, 143–164, 166–187, 188–209, 211–232, 234–256, 257–277, and 279–300; these read NSGI…GYDL, DTTQ…VWLF, PLET…IKNL, MLTY…LFDL, PLKV…IGKL, DLME…MGKL, SLKE…GDLP, LVKL…YRKL, and HLQV…ICLK. 3 disordered regions span residues 324-409, 438-478, and 573-633; these read LDLP…QKDQ, FLKG…LKEV, and KYKS…SRQE. 2 stretches are compositionally biased toward basic and acidic residues: residues 386–396 and 440–466; these read SNREQTSRNDS and KGKE…KEQL. Residues 594 to 603 are compositionally biased toward polar residues; sequence AHMSAQSPVS. The region spanning 650-763 is the Calponin-homology (CH) domain; the sequence is LREEREQIRQ…VTVQALLELP (114 aa).

Functionally, may play a role in the organization of the cytoskeleton. This chain is Leucine-rich repeat and calponin homology domain-containing protein 2 (Lrch2), found in Mus musculus (Mouse).